A 29-amino-acid polypeptide reads, in one-letter code: DCLPGWSVYEGRCYKVFNQKTWKAAEKFC.

A C-type lectin domain is found at 1 to 29; the sequence is DCLPGWSVYEGRCYKVFNQKTWKAAEKFC. Cysteines 2 and 13 form a disulfide.

Belongs to the snaclec family. As to quaternary structure, heterodimer of a metalloproteinase subunit and a regulatory subunit comprising two homologous polypeptides disulfide-linked. Expressed by the venom gland.

It is found in the secreted. In terms of biological role, multactivase, a carinactivase-like calcium-dependent prothrombin activator, activates prothrombin via recognition of the calcium ion bound conformation of its gamma-carboxyglutamic acid (GLA) domain, and the subsequent conversion of prothrombin to active thrombin is catalyzed by the catalytic subunit. This Echis multisquamatus (Central Asian sand viper) protein is Snaclec multactivase regulatory subunit.